A 201-amino-acid chain; its full sequence is Recombination protein RecR (201 aa).

A C4-type zinc finger spans residues 60-75 (CSVCGNVDTTDPCSIC). The region spanning 83–178 (TTIIVVEDVA…KITRLAHGVP (96 aa)) is the Toprim domain.

It belongs to the RecR family.

Its function is as follows. May play a role in DNA repair. It seems to be involved in an RecBC-independent recombinational process of DNA repair. It may act with RecF and RecO. This Bartonella quintana (strain Toulouse) (Rochalimaea quintana) protein is Recombination protein RecR.